A 58-amino-acid chain; its full sequence is UPF0391 membrane protein Sfri_4000 (58 aa).

The next 2 membrane-spanning stretches (helical) occupy residues 6-26 and 27-47; these read LMFL…IAGA and AAGI…ISLV.

This sequence belongs to the UPF0391 family.

The protein resides in the cell membrane. The protein is UPF0391 membrane protein Sfri_4000 of Shewanella frigidimarina (strain NCIMB 400).